The following is a 538-amino-acid chain: Exo-alpha-bergamotene synthase (538 aa).

Residues D291, D295, D435, T439, and E443 each coordinate Mg(2+). A DDXXD motif motif is present at residues 291–295; that stretch reads DDIYD.

This sequence belongs to the terpene synthase family. Mg(2+) is required as a cofactor. It depends on Mn(2+) as a cofactor.

The catalysed reaction is (2E,6E)-farnesyl diphosphate = (1S,5S,6R)-alpha-bergamotene + diphosphate. In terms of biological role, catalyzes a mixture of sesquiterpenoids from (2E,6E)-farnesyl diphosphate. Catalyzes the formation of exo-alpha-bergamotene, as well as (E)-nerolidol, (Z)-alpha-bisabolene, (E)-beta-farnesene and beta-sesquiphellandrene. Also has activity towards geranyl diphosphate, but to a much lesser extent. This Lavandula angustifolia (Lavender) protein is Exo-alpha-bergamotene synthase.